Reading from the N-terminus, the 105-residue chain is Photosystem II 5 kDa protein, chloroplastic (105 aa).

A chloroplast-targeting transit peptide spans 1-77 (MASITMTTSF…ICSVAGVATA (77 aa)).

The maturation of the PSII-T precursor to its final form occurs through a two step process. First, a stromal intermediate is formed, which, upon translocation into the thylakoid membrane, is processed to the mature protein.

It is found in the plastid. It localises to the chloroplast thylakoid membrane. Functionally, may be a component of the oxygen-evolving complex. This chain is Photosystem II 5 kDa protein, chloroplastic (PSBT), found in Gossypium hirsutum (Upland cotton).